Reading from the N-terminus, the 31-residue chain is Cytochrome b6-f complex subunit 6 (31 aa).

The chain crosses the membrane as a helical span at residues 4–26 (ITSYFGFLLAASTITPALLIGLN).

Belongs to the PetL family. In terms of assembly, the 4 large subunits of the cytochrome b6-f complex are cytochrome b6, subunit IV (17 kDa polypeptide, PetD), cytochrome f and the Rieske protein, while the 4 small subunits are PetG, PetL, PetM and PetN. The complex functions as a dimer.

It localises to the plastid. It is found in the chloroplast thylakoid membrane. In terms of biological role, component of the cytochrome b6-f complex, which mediates electron transfer between photosystem II (PSII) and photosystem I (PSI), cyclic electron flow around PSI, and state transitions. PetL is important for photoautotrophic growth as well as for electron transfer efficiency and stability of the cytochrome b6-f complex. This is Cytochrome b6-f complex subunit 6 from Calycanthus floridus var. glaucus (Eastern sweetshrub).